The primary structure comprises 434 residues: Glutamyl-tRNA reductase (434 aa).

Substrate-binding positions include 49 to 52, serine 109, 114 to 116, and glutamine 120; these read TCNR and EPQ. The Nucleophile role is filled by cysteine 50. 189 to 194 contacts NADP(+); the sequence is GAGEMC.

The protein belongs to the glutamyl-tRNA reductase family. Homodimer.

The enzyme catalyses (S)-4-amino-5-oxopentanoate + tRNA(Glu) + NADP(+) = L-glutamyl-tRNA(Glu) + NADPH + H(+). The protein operates within porphyrin-containing compound metabolism; protoporphyrin-IX biosynthesis; 5-aminolevulinate from L-glutamyl-tRNA(Glu): step 1/2. Functionally, catalyzes the NADPH-dependent reduction of glutamyl-tRNA(Glu) to glutamate 1-semialdehyde (GSA). The polypeptide is Glutamyl-tRNA reductase (Geobacter sulfurreducens (strain ATCC 51573 / DSM 12127 / PCA)).